We begin with the raw amino-acid sequence, 1982 residues long: CASP8-associated protein 2 (1982 aa).

Ala-2 carries the post-translational modification N-acetylalanine. Phosphoserine is present on Ser-20. Residues 159-191 (VKTKDLKSRSPHLDDCSKTDHRAKSDVSKDVHH) show a composition bias toward basic and acidic residues. Residues 159–552 (VKTKDLKSRS…ESGPNETKNK (394 aa)) form a disordered region. Phosphoserine is present on Ser-194. A compositionally biased stretch (basic and acidic residues) spans 198–210 (LEKEGKPHSDKRS). A compositionally biased stretch (polar residues) spans 225 to 240 (GVWSRSHYQVGEGSSN). Over residues 286–395 (GHPEKYGKGE…ERASLPHSKN (110 aa)) the composition is skewed to basic and acidic residues. Positions 396–405 (EITFSHNSSK) are enriched in polar residues. Composition is skewed to basic and acidic residues over residues 406 to 423 (YHLE…DKSV), 444 to 455 (KNIDSKEVDAMH), and 463 to 524 (KAER…KGEV). A Phosphoserine modification is found at Ser-567. Residues 569–593 (AKKQPVSQDNQHKITDIPKSSGVCD) form a disordered region. A phosphoserine mark is found at Ser-658, Ser-815, and Ser-875. Disordered regions lie at residues 875-1017 (SPPQ…DKVM), 1157-1188 (FGRD…DNSN), and 1251-1283 (ERSL…HATL). The span at 894–904 (SAHSTSKSQSD) shows a compositional bias: polar residues. Basic and acidic residues-rich tracts occupy residues 905-924 (LNKE…EADT), 936-965 (GEIR…DVRK), 999-1016 (KRPD…KDKV), and 1157-1170 (FGRD…EKTS). Ser-940 bears the Phosphoserine mark. The residue at position 1161 (Ser-1161) is a Phosphoserine. Polar residues-rich tracts occupy residues 1171–1181 (KQNAQYSNSQK) and 1269–1281 (GSSI…SQHA). The residue at position 1343 (Lys-1343) is an N6-acetyllysine. Positions 1683-1687 (YVDLT) match the SUMO interaction motif 1 (SIM); mediates the binding to polysumoylated substrates motif. The interval 1709-1982 (DQLGCSGGNL…MKLFEKSKCR (274 aa)) is NCOA2-binding. The short motif at 1737–1741 (FIDLT) is the SUMO interaction motif 2 (SIM); mediates the binding to polysumoylated substrates element. The SUMO interaction motif 3 (SIM); mediates the binding to polysumoylated substrates signature appears at 1794-1798 (YIDLT). Positions 1803–1909 (SSCEVKKDEL…IKDSSAALAT (107 aa)) are disordered. Residues 1851–1865 (KETDLTNKEKTKKPT) show a composition bias toward basic and acidic residues.

Self-associates. Component of the death-inducing signaling complex (DISC) with CASP8, FADD and FAS. Interacts with NCOA2 and NCOA3. Interacts with SRRT. Interacts with TRAF2. Interacts with NPAT. Interacts (via SIM domains) with SUMO1 and SUMO2. Interacts with SP100; may negatively regulate CASP8AP2 export from the nucleus to the cytoplasm.

The protein localises to the cytoplasm. Its subcellular location is the nucleus. It localises to the PML body. It is found in the mitochondrion. Its function is as follows. Participates in TNF-alpha-induced blockade of glucocorticoid receptor (GR) transactivation at the nuclear receptor coactivator level, upstream and independently of NF-kappa-B. Suppresses both NCOA2- and NCOA3-induced enhancement of GR transactivation. Involved in TNF-alpha-induced activation of NF-kappa-B via a TRAF2-dependent pathway. Acts as a downstream mediator for CASP8-induced activation of NF-kappa-B. Required for the activation of CASP8 in FAS-mediated apoptosis. Required for histone gene transcription and progression through S phase. The sequence is that of CASP8-associated protein 2 from Homo sapiens (Human).